The primary structure comprises 377 residues: Nitric oxide reductase FlRd-NAD(+) reductase (377 aa).

The protein belongs to the FAD-dependent oxidoreductase family. It depends on FAD as a cofactor.

It localises to the cytoplasm. It carries out the reaction 2 reduced [nitric oxide reductase rubredoxin domain] + NAD(+) + H(+) = 2 oxidized [nitric oxide reductase rubredoxin domain] + NADH. It functions in the pathway nitrogen metabolism; nitric oxide reduction. One of at least two accessory proteins for anaerobic nitric oxide (NO) reductase. Reduces the rubredoxin moiety of NO reductase. This chain is Nitric oxide reductase FlRd-NAD(+) reductase, found in Escherichia coli O45:K1 (strain S88 / ExPEC).